Reading from the N-terminus, the 200-residue chain is ADP-ribose 1''-phosphate phosphatase (200 aa).

The Macro domain occupies 1-200 (MDPPSVRSKI…EVTVVRPHGG (200 aa)). Substrate contacts are provided by residues 15 to 17 (GDL), 29 to 31 (ACN), 36 to 41 (WGKGIA), and 169 to 175 (FNAGLFG).

Belongs to the POA1 family.

The catalysed reaction is ADP-alpha-D-ribose 1''-phosphate + H2O = ADP-D-ribose + phosphate. Highly specific phosphatase involved in the metabolism of ADP-ribose 1''-phosphate (Appr1p) which is produced as a consequence of tRNA splicing. The chain is ADP-ribose 1''-phosphate phosphatase (poa1) from Aspergillus fumigatus (strain ATCC MYA-4609 / CBS 101355 / FGSC A1100 / Af293) (Neosartorya fumigata).